The following is a 63-amino-acid chain: Large ribosomal subunit protein uL29 (63 aa).

This sequence belongs to the universal ribosomal protein uL29 family.

The chain is Large ribosomal subunit protein uL29 from Serratia proteamaculans (strain 568).